Reading from the N-terminus, the 396-residue chain is Elongation factor Tu (396 aa).

Positions 10 to 205 constitute a tr-type G domain; sequence KEHVNIGTIG…AVDNYIETPV (196 aa). Residues 19–26 form a G1 region; that stretch reads GHVDHGKT. 19-26 serves as a coordination point for GTP; sequence GHVDHGKT. Residue threonine 26 coordinates Mg(2+). The segment at 60–64 is G2; that stretch reads GITIN. Positions 81-84 are G3; sequence DCPG. Residues 81–85 and 136–139 each bind GTP; these read DCPGH and NKVD. A G4 region spans residues 136 to 139; that stretch reads NKVD. The segment at 175–177 is G5; that stretch reads SAL.

This sequence belongs to the TRAFAC class translation factor GTPase superfamily. Classic translation factor GTPase family. EF-Tu/EF-1A subfamily. In terms of assembly, monomer.

The protein resides in the cytoplasm. The enzyme catalyses GTP + H2O = GDP + phosphate + H(+). Functionally, GTP hydrolase that promotes the GTP-dependent binding of aminoacyl-tRNA to the A-site of ribosomes during protein biosynthesis. The chain is Elongation factor Tu from Mycoplasmopsis pulmonis (strain UAB CTIP) (Mycoplasma pulmonis).